The following is a 312-amino-acid chain: Zinc transporter ZitB (312 aa).

6 helical membrane-spanning segments follow: residues 16–36 (LLIAFAITTLFMVTEAIGGWL), 40–60 (LALLADAGHMLTDSAALFIAL), 81–101 (LTTLAAFVNAAALLLIVILIV), 117–137 (TPMLIIAIAGLLANIFCFWIL), 153–173 (LHVLSDLLGSVGAMIAAIVIL), and 177–197 (WTPIDPILSVLVSVLILRSAW).

The protein belongs to the cation diffusion facilitator (CDF) transporter (TC 2.A.4) family. SLC30A subfamily.

Its subcellular location is the cell inner membrane. Functionally, involved in zinc efflux across the cytoplasmic membrane, thus reducing zinc accumulation in the cytoplasm and rendering bacteria more resistant to zinc. It may contribute to zinc homeostasis at low concentrations of zinc. The chain is Zinc transporter ZitB from Yersinia pestis.